The primary structure comprises 397 residues: Serine/threonine-protein kinase 17A (397 aa).

Residues 1–23 (MIPLEKPGSGGSPSAAASGSGPG) form a disordered region. Serine 9 bears the Phosphoserine mark. The 261-residue stretch at 44-304 (LSPGRELGRG…AEECLKHPWL (261 aa)) folds into the Protein kinase domain. Residues 50 to 58 (LGRGKFAVV) and lysine 73 contribute to the ATP site. Aspartate 169 acts as the Proton acceptor in catalysis.

The protein belongs to the protein kinase superfamily. CAMK Ser/Thr protein kinase family. DAP kinase subfamily. Autophosphorylated. As to expression, highly expressed in bone marrow. Lower levels in brain, heart, lung, liver and kidney.

Its subcellular location is the nucleus. The catalysed reaction is L-seryl-[protein] + ATP = O-phospho-L-seryl-[protein] + ADP + H(+). It catalyses the reaction L-threonyl-[protein] + ATP = O-phospho-L-threonyl-[protein] + ADP + H(+). Its activity is regulated as follows. Inhibited by thiazolidinedione-type compounds: inhibited by furan- and pyridone- thiazolidinediones. Acts as a positive regulator of apoptosis. May also act as a regulator of cellular reactive oxygen species. The sequence is that of Serine/threonine-protein kinase 17A (STK17A) from Oryctolagus cuniculus (Rabbit).